Reading from the N-terminus, the 86-residue chain is Cell division topological specificity factor (86 aa).

Belongs to the MinE family.

Prevents the cell division inhibition by proteins MinC and MinD at internal division sites while permitting inhibition at polar sites. This ensures cell division at the proper site by restricting the formation of a division septum at the midpoint of the long axis of the cell. This Bordetella petrii (strain ATCC BAA-461 / DSM 12804 / CCUG 43448) protein is Cell division topological specificity factor.